We begin with the raw amino-acid sequence, 103 residues long: Histone H4 (103 aa).

N6-acetyl-N6-methyllysine; alternate is present on K6. N6-methyllysine; alternate occurs at positions 6, 9, and 13. K13 carries the N6-acetyl-N6-methyllysine; alternate modification. The DNA-binding element occupies 17–21 (KRHRK). An N6-glutaryllysine modification is found at K92.

The protein belongs to the histone H4 family. As to quaternary structure, the nucleosome is a histone octamer containing two molecules each of H2A, H2B, H3 and H4 assembled in one H3-H4 heterotetramer and two H2A-H2B heterodimers. The octamer wraps approximately 147 bp of DNA. Post-translationally, glutarylation at Lys-92 (H4K91glu) destabilizes nucleosomes by promoting dissociation of the H2A-H2B dimers from nucleosomes.

The protein resides in the nucleus. The protein localises to the chromosome. Its function is as follows. Core component of nucleosome. Nucleosomes wrap and compact DNA into chromatin, limiting DNA accessibility to the cellular machineries which require DNA as a template. Histones thereby play a central role in transcription regulation, DNA repair, DNA replication and chromosomal stability. DNA accessibility is regulated via a complex set of post-translational modifications of histones, also called histone code, and nucleosome remodeling. The chain is Histone H4 (ahsb4) from Blastobotrys adeninivorans (Yeast).